We begin with the raw amino-acid sequence, 480 residues long: Prostacyclin synthase (480 aa).

A helical transmembrane segment spans residues methionine 1–arginine 21. Substrate-binding positions include arginine 104, leucine 110, asparagine 277, threonine 338 to arginine 339, and arginine 362. Cysteine 421 serves as a coordination point for heme.

This sequence belongs to the cytochrome P450 family. Heme is required as a cofactor.

Its subcellular location is the endoplasmic reticulum membrane. The catalysed reaction is prostaglandin H2 = prostaglandin I2. It catalyses the reaction a hydroperoxyeicosatetraenoate = an oxoeicosatetraenoate + H2O. The enzyme catalyses (15S)-hydroperoxy-(5Z,8Z,11Z,13E)-eicosatetraenoate = 15-oxo-(5Z,8Z,11Z,13E)-eicosatetraenoate + H2O. It carries out the reaction (15S)-hydroperoxy-(5Z,8Z,11Z,13E)-eicosatetraenoate + AH2 = (15S)-hydroxy-(5Z,8Z,11Z,13E)-eicosatetraenoate + A + H2O. Catalyzes the isomerization of prostaglandin H2 to prostacyclin (= prostaglandin I2). Its function is as follows. Catalyzes the biosynthesis and metabolism of eicosanoids. Catalyzes the isomerization of prostaglandin H2 to prostacyclin (= prostaglandin I2), a potent mediator of vasodilation and inhibitor of platelet aggregation. Additionally, displays dehydratase activity, toward hydroperoxyeicosatetraenoates (HPETEs), especially toward (15S)-hydroperoxy-(5Z,8Z,11Z,13E)-eicosatetraenoate (15(S)-HPETE). This Danio rerio (Zebrafish) protein is Prostacyclin synthase.